A 78-amino-acid polypeptide reads, in one-letter code: Acyl carrier protein (78 aa).

In terms of domain architecture, Carrier spans 2–77 (SSIEERVKKI…LAINYINENL (76 aa)). Ser37 bears the O-(pantetheine 4'-phosphoryl)serine mark.

Belongs to the acyl carrier protein (ACP) family. Post-translationally, 4'-phosphopantetheine is transferred from CoA to a specific serine of apo-ACP by AcpS. This modification is essential for activity because fatty acids are bound in thioester linkage to the sulfhydryl of the prosthetic group.

The protein localises to the cytoplasm. Its pathway is lipid metabolism; fatty acid biosynthesis. Its function is as follows. Carrier of the growing fatty acid chain in fatty acid biosynthesis. The polypeptide is Acyl carrier protein (Saccharophagus degradans (strain 2-40 / ATCC 43961 / DSM 17024)).